Here is a 342-residue protein sequence, read N- to C-terminus: L-threonine 3-dehydrogenase (342 aa).

Position 38 (Cys-38) interacts with Zn(2+). Active-site charge relay system residues include Thr-40 and His-43. Zn(2+) is bound by residues His-63, Glu-64, Cys-93, Cys-96, Cys-99, and Cys-107. NAD(+) is bound by residues Ile-175, Asp-195, Arg-200, 262–264 (LGI), and 286–287 (IY).

The protein belongs to the zinc-containing alcohol dehydrogenase family. Homotetramer. The cofactor is Zn(2+).

It localises to the cytoplasm. The catalysed reaction is L-threonine + NAD(+) = (2S)-2-amino-3-oxobutanoate + NADH + H(+). Its pathway is amino-acid degradation; L-threonine degradation via oxydo-reductase pathway; glycine from L-threonine: step 1/2. Functionally, catalyzes the NAD(+)-dependent oxidation of L-threonine to 2-amino-3-ketobutyrate. The chain is L-threonine 3-dehydrogenase from Burkholderia ambifaria (strain MC40-6).